We begin with the raw amino-acid sequence, 274 residues long: Large ribosomal subunit protein uL2 (274 aa).

The segment at 221–256 is disordered; the sequence is RGTAMNPVDHPHGGGEGRNFGKHPVTPWGVPTKGYK.

Belongs to the universal ribosomal protein uL2 family. As to quaternary structure, part of the 50S ribosomal subunit. Forms a bridge to the 30S subunit in the 70S ribosome.

In terms of biological role, one of the primary rRNA binding proteins. Required for association of the 30S and 50S subunits to form the 70S ribosome, for tRNA binding and peptide bond formation. It has been suggested to have peptidyltransferase activity; this is somewhat controversial. Makes several contacts with the 16S rRNA in the 70S ribosome. In Hahella chejuensis (strain KCTC 2396), this protein is Large ribosomal subunit protein uL2.